The primary structure comprises 549 residues: MKNFLLLAIMLFPHLTWANVISETGERQPVNIQAIIMFVLFVGFTLYITYWASKKTRSRTDYYTAGGRITGFQNGMAIAGDFMSAASFLGISALVYTSGYDGLIYSIGFLIGWPIILFLIAERLRNLGRYTFADVASYRLQQRPIRILSAIGSLFVVALYLIAQMVGAGKLIELLFGLNYHVAVVLVGILMVLYVLFGGMLATTWVQIIKAILLLAGATFMALMVMKIVNFNFNTLFKEAIAVHSRGEAIMSPGGLVSDPISALSLGLALMFGTAGLPHIIMRFFTVSDAKEARKSVFYATGFIGYFYILTFIIGFGAILLVSPNPSFKDTTGALIGGTNMAAVHLASAVGGNLFLGFISAVAFATILAVVAGLTLAGASAVSHDLYANAIKSGKANERDELRVSKITVVILGFIAIGLGILFENQNIAFMVGLAFSIAASCNFPIILLSMYWHKLTTRGALVGGWLGLITAVVLMILGPTIWVSILGHEKPIYPYEYPALFSMIIAFIGSWLFSITDNSQQGMQEREQFRIQFIRSQTGLGIAQGKTH.

The next 13 membrane-spanning stretches (helical) occupy residues 32-54, 75-97, 102-124, 145-167, 182-204, 211-233, 263-285, 298-320, 361-383, 404-423, 428-450, 462-484, and 494-516; these read IQAIIMFVLFVGFTLYITYWASK, GMAIAGDFMSAASFLGISALVYT, GLIYSIGFLIGWPIILFLIAERL, IRILSAIGSLFVVALYLIAQMVG, VAVVLVGILMVLYVLFGGMLATT, AILLLAGATFMALMVMKIVNFNF, ALSLGLALMFGTAGLPHIIMRFF, FYATGFIGYFYILTFIIGFGAIL, AVAFATILAVVAGLTLAGASAVS, VSKITVVILGFIAIGLGILF, IAFMVGLAFSIAASCNFPIILLS, LVGGWLGLITAVVLMILGPTIWV, and YPYEYPALFSMIIAFIGSWLFSI.

This sequence belongs to the sodium:solute symporter (SSF) (TC 2.A.21) family.

Its subcellular location is the cell inner membrane. Functionally, transports acetate. In Photorhabdus laumondii subsp. laumondii (strain DSM 15139 / CIP 105565 / TT01) (Photorhabdus luminescens subsp. laumondii), this protein is Cation/acetate symporter ActP.